Reading from the N-terminus, the 304-residue chain is tRNA pseudouridine synthase B (304 aa).

Catalysis depends on Asp-38, which acts as the Nucleophile.

It belongs to the pseudouridine synthase TruB family. Type 1 subfamily.

It carries out the reaction uridine(55) in tRNA = pseudouridine(55) in tRNA. Its function is as follows. Responsible for synthesis of pseudouridine from uracil-55 in the psi GC loop of transfer RNAs. The polypeptide is tRNA pseudouridine synthase B (Listeria monocytogenes serovar 1/2a (strain ATCC BAA-679 / EGD-e)).